The primary structure comprises 223 residues: uncharacterized protein (223 aa).

Residues 40–70 (GSKRLKPAKFGTEGKERVEQRTERQRTGSSK) are disordered. Basic and acidic residues predominate over residues 51-70 (TEGKERVEQRTERQRTGSSK).

This is an uncharacterized protein from Homo sapiens (Human).